Reading from the N-terminus, the 186-residue chain is MSLVFDKWELDEVKVEDMGLAKYICLDSILVPHTMGRHVKRQFAKSKVSIVERLINKVMRTERNSGKKNKAYKIVQEAFEIINRRTKENPVQILVKAVENTSPREETTRIKYGGIGYQVAVDISPQRRVDLSLGFITRGAMQAAFKNKKSIEECLANEIMLAAEYDTRSFAIQKKEEKERIARSAH.

Belongs to the universal ribosomal protein uS7 family. As to quaternary structure, part of the 30S ribosomal subunit.

Its function is as follows. One of the primary rRNA binding proteins, it binds directly to 16S rRNA where it nucleates assembly of the head domain of the 30S subunit. Is located at the subunit interface close to the decoding center. This Methanothermobacter thermautotrophicus (strain ATCC 29096 / DSM 1053 / JCM 10044 / NBRC 100330 / Delta H) (Methanobacterium thermoautotrophicum) protein is Small ribosomal subunit protein uS7.